A 427-amino-acid polypeptide reads, in one-letter code: Glutamate-1-semialdehyde 2,1-aminomutase (427 aa).

At K265 the chain carries N6-(pyridoxal phosphate)lysine.

The protein belongs to the class-III pyridoxal-phosphate-dependent aminotransferase family. HemL subfamily. As to quaternary structure, homodimer. Pyridoxal 5'-phosphate serves as cofactor.

The protein localises to the cytoplasm. It carries out the reaction (S)-4-amino-5-oxopentanoate = 5-aminolevulinate. The protein operates within porphyrin-containing compound metabolism; protoporphyrin-IX biosynthesis; 5-aminolevulinate from L-glutamyl-tRNA(Glu): step 2/2. This is Glutamate-1-semialdehyde 2,1-aminomutase from Burkholderia ambifaria (strain ATCC BAA-244 / DSM 16087 / CCUG 44356 / LMG 19182 / AMMD) (Burkholderia cepacia (strain AMMD)).